The sequence spans 131 residues: Small ribosomal subunit protein uS8 (131 aa).

This sequence belongs to the universal ribosomal protein uS8 family. Part of the 30S ribosomal subunit. Contacts proteins S5 and S12.

In terms of biological role, one of the primary rRNA binding proteins, it binds directly to 16S rRNA central domain where it helps coordinate assembly of the platform of the 30S subunit. This is Small ribosomal subunit protein uS8 from Polaromonas naphthalenivorans (strain CJ2).